Consider the following 301-residue polypeptide: N-acetylmuramic acid 6-phosphate etherase (301 aa).

An SIS domain is found at 59 to 222 (TSEALMHGGR…STSVMVKLGK (164 aa)). The active-site Proton donor is the glutamate 87. Glutamate 118 is a catalytic residue.

It belongs to the GCKR-like family. MurNAc-6-P etherase subfamily. In terms of assembly, homodimer.

It catalyses the reaction N-acetyl-D-muramate 6-phosphate + H2O = N-acetyl-D-glucosamine 6-phosphate + (R)-lactate. It participates in amino-sugar metabolism; N-acetylmuramate degradation. Its function is as follows. Specifically catalyzes the cleavage of the D-lactyl ether substituent of MurNAc 6-phosphate, producing GlcNAc 6-phosphate and D-lactate. The sequence is that of N-acetylmuramic acid 6-phosphate etherase from Picosynechococcus sp. (strain ATCC 27264 / PCC 7002 / PR-6) (Agmenellum quadruplicatum).